A 754-amino-acid chain; its full sequence is Ubiquitin carboxyl-terminal hydrolase 9 (754 aa).

Residues 1–14 (MIKRWLSVNRKKSH) are compositionally biased toward basic residues. The segment at 1-76 (MIKRWLSVNR…SKFSSQTDNL (76 aa)) is disordered. Residues 42 to 58 (SIAKSPSAKSSTSSIPS) are compositionally biased toward low complexity. In terms of domain architecture, USP spans 134–667 (FGYENFGNTC…TAYVLFYKET (534 aa)). The active-site Nucleophile is Cys-143. The span at 194–209 (ETSTNSGNSNTGYQSN) shows a compositional bias: polar residues. A disordered region spans residues 194–273 (ETSTNSGNSN…DNNEMERPQP (80 aa)). Positions 222-233 (QSDQDNSSSSTQ) are enriched in low complexity. Positions 250 to 272 (GKDKSNYKDSAKKDDNNEMERPQ) are enriched in basic and acidic residues. His-618 serves as the catalytic Proton acceptor. Residues 726–754 (VKTAETKTPLNDKKRNKQKRKSRILSFIK) form a disordered region. Basic and acidic residues predominate over residues 727-738 (KTAETKTPLNDK). Positions 739–748 (KRNKQKRKSR) are enriched in basic residues.

The protein belongs to the peptidase C19 family.

The catalysed reaction is Thiol-dependent hydrolysis of ester, thioester, amide, peptide and isopeptide bonds formed by the C-terminal Gly of ubiquitin (a 76-residue protein attached to proteins as an intracellular targeting signal).. This is Ubiquitin carboxyl-terminal hydrolase 9 (UBP9) from Saccharomyces cerevisiae (strain ATCC 204508 / S288c) (Baker's yeast).